Here is a 121-residue protein sequence, read N- to C-terminus: Small ribosomal subunit protein eS24 (121 aa).

Belongs to the eukaryotic ribosomal protein eS24 family.

In Pyrobaculum aerophilum (strain ATCC 51768 / DSM 7523 / JCM 9630 / CIP 104966 / NBRC 100827 / IM2), this protein is Small ribosomal subunit protein eS24.